The following is a 219-amino-acid chain: Thymidylate kinase (219 aa).

An ATP-binding site is contributed by 7 to 14; it reads GIDGAGKS.

This sequence belongs to the thymidylate kinase family.

The catalysed reaction is dTMP + ATP = dTDP + ADP. Functionally, phosphorylation of dTMP to form dTDP in both de novo and salvage pathways of dTTP synthesis. This is Thymidylate kinase from Chlorobium phaeobacteroides (strain DSM 266 / SMG 266 / 2430).